Reading from the N-terminus, the 123-residue chain is Large ribosomal subunit protein bL12 (123 aa).

It belongs to the bacterial ribosomal protein bL12 family. As to quaternary structure, homodimer. Part of the ribosomal stalk of the 50S ribosomal subunit. Forms a multimeric L10(L12)X complex, where L10 forms an elongated spine to which 2 to 4 L12 dimers bind in a sequential fashion. Binds GTP-bound translation factors.

Its function is as follows. Forms part of the ribosomal stalk which helps the ribosome interact with GTP-bound translation factors. Is thus essential for accurate translation. The sequence is that of Large ribosomal subunit protein bL12 from Borrelia turicatae (strain 91E135).